The primary structure comprises 491 residues: Chromosomal replication initiator protein DnaA (491 aa).

The interval 1–69 (MTTWDKCLKK…TIQECHGNDL (69 aa)) is domain I, interacts with DnaA modulators. The interval 69–154 (LIIEYSNKKF…KEDEEYSFGL (86 aa)) is domain II. The interval 155–371 (PLKEKYVFDS…GALNRVLTTS (217 aa)) is domain III, AAA+ region. ATP-binding residues include G199, G201, K202, and T203. The tract at residues 372-491 (KFNHKDPTIE…YELLLDKISR (120 aa)) is domain IV, binds dsDNA.

The protein belongs to the DnaA family. Oligomerizes as a right-handed, spiral filament on DNA at oriC.

The protein resides in the cytoplasm. In terms of biological role, plays an essential role in the initiation and regulation of chromosomal replication. ATP-DnaA binds to the origin of replication (oriC) to initiate formation of the DNA replication initiation complex once per cell cycle. Binds the DnaA box (a 9 base pair repeat at the origin) and separates the double-stranded (ds)DNA. Forms a right-handed helical filament on oriC DNA; dsDNA binds to the exterior of the filament while single-stranded (ss)DNA is stabiized in the filament's interior. The ATP-DnaA-oriC complex binds and stabilizes one strand of the AT-rich DNA unwinding element (DUE), permitting loading of DNA polymerase. After initiation quickly degrades to an ADP-DnaA complex that is not apt for DNA replication. Binds acidic phospholipids. The sequence is that of Chromosomal replication initiator protein DnaA from Francisella tularensis subsp. novicida (strain U112).